A 36-amino-acid chain; its full sequence is Photosystem II reaction center protein Y (36 aa).

At 1–4 (MDTR) the chain is on the lumenal side. Residues 5–23 (LLVIAAPVLVAASWALFNI) traverse the membrane as a helical segment. Over 24–36 (GRLAIQQIQRLSR) the chain is Stromal.

Belongs to the PsbY family. In terms of assembly, PSII is composed of 1 copy each of membrane proteins PsbA, PsbB, PsbC, PsbD, PsbE, PsbF, PsbH, PsbI, PsbJ, PsbK, PsbL, PsbM, PsbT, PsbX, PsbY, PsbZ, Psb30/Ycf12, at least 3 peripheral proteins of the oxygen-evolving complex and a large number of cofactors. It forms dimeric complexes.

The protein localises to the plastid. Its subcellular location is the chloroplast thylakoid membrane. Loosely associated component of the core of photosystem II (PSII), it is not always seen in crystals. PSII is a light-driven water plastoquinone oxidoreductase, using light energy to abstract electrons from H(2)O, generating a proton gradient subsequently used for ATP formation. This is Photosystem II reaction center protein Y from Thalassiosira pseudonana (Marine diatom).